A 340-amino-acid polypeptide reads, in one-letter code: Central glycolytic genes regulator (340 aa).

Residues 37-56 constitute a DNA-binding region (H-T-H motif); the sequence is RRSLSASLGISERVLRGEVQ. Beta-D-fructose 1,6-bisphosphate-binding positions include 149–152, Arg-175, Gln-185, 250–251, Glu-269, and Lys-310; these read GGTT and RR.

It belongs to the SorC transcriptional regulatory family. In terms of assembly, homotetramer. Binds primarily as a dimer to each half-site of the full-length operator, with much higher affinity for the right site. Then, both dimers interact, bridging the two-half sites of the operator region.

Stability and function are regulated by the effector molecule fructose-1,6-bisphosphate (FBP). In the presence of glucose, binding of FBP to the low-affinity sugar-binding site of CggR disrupts dimer/dimer bridging interactions and triggers a tetramer to dimer transition, which leaves two physically independent dimers on the target DNA and allows transcription of the downstream coding sequences by the RNA polymerase. In addition, FBP and several other phosphorylated compounds can bind to a high-affinity binding-site and protect CggR against aggregation and proteolysis. Functionally, in the absence of glucose, represses the transcription of the gapA operon, which encodes five key glycolytic enzymes. Binds specifically to the cggR-gapA promoter region and blocks the progression of the RNA polymerase, leading to the arrest of the transcription. The protein is Central glycolytic genes regulator (cggR) of Bacillus subtilis (strain 168).